A 180-amino-acid chain; its full sequence is Adenine phosphoribosyltransferase (180 aa).

Residue S2 is modified to N-acetylserine. Residues S15 and S30 each carry the phosphoserine modification. Y60 carries the phosphotyrosine modification. The residue at position 66 (S66) is a Phosphoserine. K114 is modified (N6-acetyllysine). T135 is modified (phosphothreonine).

It belongs to the purine/pyrimidine phosphoribosyltransferase family. In terms of assembly, homodimer.

The protein localises to the cytoplasm. It carries out the reaction AMP + diphosphate = 5-phospho-alpha-D-ribose 1-diphosphate + adenine. Its pathway is purine metabolism; AMP biosynthesis via salvage pathway; AMP from adenine: step 1/1. Its function is as follows. Catalyzes a salvage reaction resulting in the formation of AMP, that is energically less costly than de novo synthesis. This Mus musculus (Mouse) protein is Adenine phosphoribosyltransferase.